The sequence spans 140 residues: Large ribosomal subunit protein bL17 (140 aa).

The protein belongs to the bacterial ribosomal protein bL17 family. As to quaternary structure, part of the 50S ribosomal subunit. Contacts protein L32.

In Rhizobium rhizogenes (strain K84 / ATCC BAA-868) (Agrobacterium radiobacter), this protein is Large ribosomal subunit protein bL17.